The chain runs to 104 residues: Replication restart protein PriB (104 aa).

Residues 1-101 form the SSB domain; sequence MTNRLELSGV…LHADHIEIIC (101 aa).

This sequence belongs to the PriB family. Homodimer. Interacts with PriA and DnaT. Component of the replication restart primosome. Primosome assembly occurs via a 'hand-off' mechanism. PriA binds to replication forks, subsequently PriB then DnaT bind; DnaT then displaces ssDNA to generate the helicase loading substrate.

Involved in the restart of stalled replication forks, which reloads the replicative helicase on sites other than the origin of replication; the PriA-PriB pathway is the major replication restart pathway. During primosome assembly it facilitates complex formation between PriA and DnaT on DNA; stabilizes PriA on DNA. Stimulates the DNA unwinding activity of PriA helicase. This chain is Replication restart protein PriB, found in Photobacterium profundum (strain SS9).